The following is a 185-amino-acid chain: Elongation factor P (185 aa).

It belongs to the elongation factor P family.

It localises to the cytoplasm. Its pathway is protein biosynthesis; polypeptide chain elongation. Functionally, involved in peptide bond synthesis. Stimulates efficient translation and peptide-bond synthesis on native or reconstituted 70S ribosomes in vitro. Probably functions indirectly by altering the affinity of the ribosome for aminoacyl-tRNA, thus increasing their reactivity as acceptors for peptidyl transferase. The protein is Elongation factor P of Burkholderia mallei (strain NCTC 10247).